Reading from the N-terminus, the 603-residue chain is Elongation factor 4 (603 aa).

Residues 7 to 189 enclose the tr-type G domain; that stretch reads KKIRNFCIIA…SVVKNVPPPE (183 aa). GTP is bound by residues 19-24 and 136-139; these read DHGKST and NKID.

Belongs to the TRAFAC class translation factor GTPase superfamily. Classic translation factor GTPase family. LepA subfamily.

The protein resides in the cell membrane. The catalysed reaction is GTP + H2O = GDP + phosphate + H(+). Required for accurate and efficient protein synthesis under certain stress conditions. May act as a fidelity factor of the translation reaction, by catalyzing a one-codon backward translocation of tRNAs on improperly translocated ribosomes. Back-translocation proceeds from a post-translocation (POST) complex to a pre-translocation (PRE) complex, thus giving elongation factor G a second chance to translocate the tRNAs correctly. Binds to ribosomes in a GTP-dependent manner. The polypeptide is Elongation factor 4 (Acetivibrio thermocellus (strain ATCC 27405 / DSM 1237 / JCM 9322 / NBRC 103400 / NCIMB 10682 / NRRL B-4536 / VPI 7372) (Clostridium thermocellum)).